The primary structure comprises 528 residues: ATP synthase subunit beta 2 (528 aa).

The span at 1 to 10 (MADPQATNGT) shows a compositional bias: polar residues. A disordered region spans residues 1–27 (MADPQATNGTGAACAERDASDVGDARD). Residues 15-27 (AERDASDVGDARD) are compositionally biased toward basic and acidic residues. 179–186 (GGAGVGKT) contributes to the ATP binding site. Basic and acidic residues predominate over residues 488-499 (AAAREADARREA). Residues 488–528 (AAAREADARREAAAAASGAGPGTTSDPASGSAEPQGARHGR) form a disordered region.

Belongs to the ATPase alpha/beta chains family. F-type ATPases have 2 components, CF(1) - the catalytic core - and CF(0) - the membrane proton channel. CF(1) has five subunits: alpha(3), beta(3), gamma(1), delta(1), epsilon(1). CF(0) has three main subunits: a(1), b(2) and c(9-12). The alpha and beta chains form an alternating ring which encloses part of the gamma chain. CF(1) is attached to CF(0) by a central stalk formed by the gamma and epsilon chains, while a peripheral stalk is formed by the delta and b chains.

It is found in the cell inner membrane. It carries out the reaction ATP + H2O + 4 H(+)(in) = ADP + phosphate + 5 H(+)(out). Its function is as follows. Produces ATP from ADP in the presence of a proton gradient across the membrane. The catalytic sites are hosted primarily by the beta subunits. The protein is ATP synthase subunit beta 2 of Burkholderia pseudomallei (strain 1106a).